A 171-amino-acid polypeptide reads, in one-letter code: MKIWKDIFTGDEMFSDTYKLKLVDNVMYEVYGKHVSRTLGDVQLDGANPSAEEADEGTDNATESGVDIVLNHRLVETGFADKKQFTTYLKDYMKKLVTRLEENNPSEVEVFKTNINKVMKDLLGRFKDLQFFTGESMDCEGLIAMLEYRDIDGESTPVLLCFKHGLEEEKF.

One can recognise a TCTP domain in the interval 1–171 (MKIWKDIFTG…FKHGLEEEKF (171 aa)).

The protein belongs to the TCTP family.

The protein localises to the cytoplasm. Involved in calcium binding and microtubule stabilization. This chain is Translationally-controlled tumor protein homolog (Tctp), found in Aedes aegypti (Yellowfever mosquito).